We begin with the raw amino-acid sequence, 72 residues long: DNA gyrase inhibitor YacG (72 aa).

Zn(2+) contacts are provided by C17, C20, C32, and C36. Residues 52–72 form a disordered region; the sequence is PGPEEDEMSYPPHSNDGNRSR.

This sequence belongs to the DNA gyrase inhibitor YacG family. In terms of assembly, interacts with GyrB. Zn(2+) is required as a cofactor.

Inhibits all the catalytic activities of DNA gyrase by preventing its interaction with DNA. Acts by binding directly to the C-terminal domain of GyrB, which probably disrupts DNA binding by the gyrase. The protein is DNA gyrase inhibitor YacG of Methylorubrum extorquens (strain CM4 / NCIMB 13688) (Methylobacterium extorquens).